The sequence spans 190 residues: Translation initiation factor IF-3 (190 aa).

Belongs to the IF-3 family. In terms of assembly, monomer.

The protein localises to the cytoplasm. Its function is as follows. IF-3 binds to the 30S ribosomal subunit and shifts the equilibrium between 70S ribosomes and their 50S and 30S subunits in favor of the free subunits, thus enhancing the availability of 30S subunits on which protein synthesis initiation begins. The protein is Translation initiation factor IF-3 of Prochlorococcus marinus (strain MIT 9312).